Consider the following 382-residue polypeptide: MSHSAVSQAGAVSVSIENQRSLRRSVFKQNNSISFNSKSWSSSLALNQKTTSIRDGKRYPSTTICMSVQQTSSSKVTVSPIELEDPKDPPLNLYKPKESYTAKIVSVERVVGPKAPGETCHIVIDHDGNLPYWEGQSYGVIPPGENPKKPGAPHNVRLYSIASTRYGDFFDGKTASLCVRRAVYYDPETGKEDPSKNGVCSNFLCDSKPGDKIQITGPSGKVMLLPESDPNATHIMIATGTGVAPYRGYLRRMFMENVPNKTFSGLAWLFLGVANTDSLLYDEEFTKYLKDHPDNFRFDKALSREEKNKKGGKMYVQDKIEEYSDEIFKLLDNGAHIYFCGLKGMMPGIQDTLKRVAEERGESWDLKLSQLRKNKQWHVEVY.

Residues 1–64 constitute a chloroplast transit peptide; sequence MSHSAVSQAG…DGKRYPSTTI (64 aa). The FAD-binding FR-type domain maps to 97 to 225; that stretch reads KESYTAKIVS…TGPSGKVMLL (129 aa). A disulfide bridge links C200 with C205. At S201 the chain carries Phosphoserine. At T233 the chain carries Phosphothreonine. 235-253 contacts NADP(+); sequence IMIATGTGVAPYRGYLRRM.

This sequence belongs to the ferredoxin--NADP reductase type 1 family. The cofactor is FAD. Expressed in shoots and roots. More abundant in roots than RFNR1.

Its subcellular location is the plastid. The protein localises to the chloroplast. It carries out the reaction 2 reduced [2Fe-2S]-[ferredoxin] + NADP(+) + H(+) = 2 oxidized [2Fe-2S]-[ferredoxin] + NADPH. Functionally, maintains the supply of reduced ferredoxin under non-photosynthetic conditions. The protein is Ferredoxin--NADP reductase, root isozyme 2, chloroplastic (RFNR2) of Arabidopsis thaliana (Mouse-ear cress).